The primary structure comprises 184 residues: MADDQLNEKDLNAEEAAAVDNGARVQELEEQLAAAKDQSLRVAAEAQNSIRRAEQEVDKARKFALEKFSSDLLPVIDSLELALAHSSADDEHVKQIREGVELTLKMFQDTLKRYNLEAVDPHGQPFNPEHHQAMAMQENAEVEPNSVLNVFQKGYLLNGRLLRPAMVVVSKAPAAPQPSIDEKA.

The protein belongs to the GrpE family. Homodimer.

It localises to the cytoplasm. Functionally, participates actively in the response to hyperosmotic and heat shock by preventing the aggregation of stress-denatured proteins, in association with DnaK and GrpE. It is the nucleotide exchange factor for DnaK and may function as a thermosensor. Unfolded proteins bind initially to DnaJ; upon interaction with the DnaJ-bound protein, DnaK hydrolyzes its bound ATP, resulting in the formation of a stable complex. GrpE releases ADP from DnaK; ATP binding to DnaK triggers the release of the substrate protein, thus completing the reaction cycle. Several rounds of ATP-dependent interactions between DnaJ, DnaK and GrpE are required for fully efficient folding. The polypeptide is Protein GrpE (Pseudomonas putida (strain GB-1)).